Consider the following 612-residue polypeptide: Sorting nexin MVP1 (612 aa).

Residues 35-68 are disordered; it reads SSAPSPAGSVTPARATASASEGRNIAANGNKEEG. The region spanning 226 to 334 is the PX domain; the sequence is WKDQERIVVT…NIFLTSSSFE (109 aa). Positions 263, 265, 289, and 301 each coordinate a 1,2-diacyl-sn-glycero-3-phospho-(1D-myo-inositol-3-phosphate).

Belongs to the sorting nexin family.

The protein localises to the cytoplasm. Its subcellular location is the membrane. Functionally, required for vacuolar protein sorting. The chain is Sorting nexin MVP1 (MVP1) from Cryptococcus neoformans var. neoformans serotype D (strain B-3501A) (Filobasidiella neoformans).